We begin with the raw amino-acid sequence, 524 residues long: Tyrosine-protein kinase HCK (524 aa).

Disordered stretches follow at residues 1-20 (MGGR…GRVP) and 35-71 (KASK…LPPG). The N-myristoyl glycine moiety is linked to residue G2. Residue G3 is the site of S-palmitoyl cysteine attachment. Position 50 is a phosphotyrosine; by autocatalysis (Y50). The SH3 domain maps to 76 to 136 (SEDTIVVALY…PSNYVARVNS (61 aa)). The SH2 domain maps to 142–239 (WFFKGISRKD…GLCQKLSVPC (98 aa)). Position 200 is a phosphothreonine (T200). Residue Y207 is modified to Phosphotyrosine. The region spanning 260–513 (LQMEKKLGAG…YIQSVLDDFY (254 aa)) is the Protein kinase domain. Residues 266 to 274 (LGAGQFGEV) and K288 each bind ATP. Residue D379 is the Proton acceptor of the active site. Y409 carries the phosphotyrosine; by autocatalysis modification. S460 carries the phosphoserine modification. Y520 carries the phosphotyrosine modification.

This sequence belongs to the protein kinase superfamily. Tyr protein kinase family. SRC subfamily. In terms of assembly, interacts with ADAM15. Interacts with FASLG. Interacts with ARRB1 and ARRB2. Interacts with FCGR1A; the interaction may be indirect. Interacts with IL6ST. Interacts (via SH3 domain) with ELMO1. Interacts (via SH3 domain) with TP73. Interacts with YAP1. Interacts with ABL1 and ITGB1, and thereby recruits ABL1 to activated ITGB1. Interacts (via SH2 domain) with FLT3 (tyrosine phosphorylated). Interacts with CBL. Interacts with VAV1, WAS and RAPGEF1. Interacts (via SH3 domain) with WDCP. Phosphorylated on several tyrosine residues. Autophosphorylated. Becomes rapidly phosphorylated upon activation of the immunoglobulin receptors FCGR1A and FCGR2A. Phosphorylation at Tyr-409 increases kinase activity. Phosphorylation at Tyr-520 inhibits kinase activity. Kinase activity is not required for phosphorylation at Tyr-520, suggesting that this site may be a target of other kinases. Post-translationally, ubiquitinated by CBL, leading to its degradation via the proteasome. In terms of processing, isoform 2 palmitoylation at position 2 requires prior myristoylation. Palmitoylation at position 3 is required for caveolar localization of isoform 2. As to expression, expressed strongly in spleen and at very low levels in thymus.

Its subcellular location is the cytoplasmic vesicle. It localises to the secretory vesicle. The protein resides in the cytoplasm. The protein localises to the cytosol. It is found in the membrane. Its subcellular location is the caveola. It localises to the lysosome. The protein resides in the cell projection. The protein localises to the podosome membrane. It is found in the cell membrane. Its subcellular location is the cell junction. It localises to the focal adhesion. The protein resides in the cytoskeleton. The protein localises to the golgi apparatus. It is found in the nucleus. The enzyme catalyses L-tyrosyl-[protein] + ATP = O-phospho-L-tyrosyl-[protein] + ADP + H(+). Subject to autoinhibition, mediated by intramolecular interactions involving the SH2 and SH3 domains. Kinase activity is also regulated by phosphorylation at regulatory tyrosine residues. Phosphorylation at Tyr-409 is required for optimal activity. Phosphorylation at Tyr-520 inhibits kinase activity. Functionally, non-receptor tyrosine-protein kinase found in hematopoietic cells that transmits signals from cell surface receptors and plays an important role in the regulation of innate immune responses, including neutrophil, monocyte, macrophage and mast cell functions, phagocytosis, cell survival and proliferation, cell adhesion and migration. Acts downstream of receptors that bind the Fc region of immunoglobulins, such as FCGR1A and FCGR2A, but also CSF3R, PLAUR, the receptors for IFNG, IL2, IL6 and IL8, and integrins, such as ITGB1 and ITGB2. During the phagocytic process, mediates mobilization of secretory lysosomes, degranulation, and activation of NADPH oxidase to bring about the respiratory burst. Plays a role in the release of inflammatory molecules. Promotes reorganization of the actin cytoskeleton and actin polymerization, formation of podosomes and cell protrusions. Inhibits TP73-mediated transcription activation and TP73-mediated apoptosis. Phosphorylates CBL in response to activation of immunoglobulin gamma Fc region receptors. Phosphorylates ADAM15, BCR, ELMO1, FCGR2A, GAB1, GAB2, RAPGEF1, STAT5B, TP73, VAV1 and WAS. The polypeptide is Tyrosine-protein kinase HCK (Hck) (Rattus norvegicus (Rat)).